A 113-amino-acid chain; its full sequence is UPF0145 protein TK1926 (113 aa).

This sequence belongs to the UPF0145 family.

This is UPF0145 protein TK1926 from Thermococcus kodakarensis (strain ATCC BAA-918 / JCM 12380 / KOD1) (Pyrococcus kodakaraensis (strain KOD1)).